We begin with the raw amino-acid sequence, 544 residues long: T-complex protein 1 subunit gamma (544 aa).

A disulfide bond links C368 and C374. Residues 525 to 544 (SKKRGGNEPTNPAAMAQGQE) form a disordered region.

Belongs to the TCP-1 chaperonin family. As to quaternary structure, heterooligomeric complex of about 850 to 900 kDa that forms two stacked rings, 12 to 16 nm in diameter.

It localises to the cytoplasm. Molecular chaperone; assists the folding of proteins upon ATP hydrolysis. Known to play a role, in vitro, in the folding of actin and tubulin. The protein is T-complex protein 1 subunit gamma of Drosophila melanogaster (Fruit fly).